The following is a 520-amino-acid chain: Cytochrome P450 4F2 (520 aa).

The propeptide occupies M1 to L4. 2 residues coordinate heme: E328 and C468.

It belongs to the cytochrome P450 family. Heme is required as a cofactor. As to expression, liver. Also present in kidney: specifically expressed in the S2 and S3 segments of proximal tubules in cortex and outer medulla.

It localises to the microsome membrane. Its subcellular location is the endoplasmic reticulum membrane. The catalysed reaction is an organic molecule + reduced [NADPH--hemoprotein reductase] + O2 = an alcohol + oxidized [NADPH--hemoprotein reductase] + H2O + H(+). It carries out the reaction (5Z,8Z,11Z,14Z)-eicosatetraenoate + reduced [NADPH--hemoprotein reductase] + O2 = 20-hydroxy-(5Z,8Z,11Z,14Z)-eicosatetraenoate + oxidized [NADPH--hemoprotein reductase] + H2O + H(+). The enzyme catalyses (5Z,8Z,11Z)-eicosatrienoate + reduced [NADPH--hemoprotein reductase] + O2 = 20-hydroxy-(5Z,8Z,11Z)-eicosatrienoate + oxidized [NADPH--hemoprotein reductase] + H2O + H(+). It catalyses the reaction (5Z,8Z,11Z,14Z,17Z)-eicosapentaenoate + reduced [NADPH--hemoprotein reductase] + O2 = 20-hydroxy-(5Z,8Z,11Z,14Z,17Z)-eicosapentaenoate + oxidized [NADPH--hemoprotein reductase] + H2O + H(+). The catalysed reaction is (4Z,7Z,10Z,13Z,16Z,19Z)-docosahexaenoate + reduced [NADPH--hemoprotein reductase] + O2 = 22-hydroxy-(4Z,7Z,10Z,13Z,16Z,19Z)-docosahexaenoate + oxidized [NADPH--hemoprotein reductase] + H2O + H(+). It carries out the reaction 8,9-epoxy-(5Z,11Z,14Z)-eicosatrienoate + reduced [NADPH--hemoprotein reductase] + O2 = 20-hydroxy-8,9-epoxy-(5Z,11Z,14Z)-eicosatrienoate + oxidized [NADPH--hemoprotein reductase] + H2O + H(+). The enzyme catalyses (9S,10R)-epoxy-octadecanoate + reduced [NADPH--hemoprotein reductase] + O2 = 18-hydroxy-(9S,10R)-epoxy-octadecanoate + oxidized [NADPH--hemoprotein reductase] + H2O + H(+). It catalyses the reaction (9R,10S)-epoxy-octadecanoate + reduced [NADPH--hemoprotein reductase] + O2 = 18-hydroxy-(9R,10S)-epoxy-octadecanoate + oxidized [NADPH--hemoprotein reductase] + H2O + H(+). The catalysed reaction is 12,13-epoxy-(9Z)-octadecenoate + reduced [NADPH--hemoprotein reductase] + O2 = 18-hydroxy-12,13-epoxy-(9Z)-octadecenoate + oxidized [NADPH--hemoprotein reductase] + H2O + H(+). It carries out the reaction 9,10-epoxy-(12Z)-octadecenoate + reduced [NADPH--hemoprotein reductase] + O2 = 18-hydroxy-9,10-epoxy-(12Z)-octadecenoate + oxidized [NADPH--hemoprotein reductase] + H2O + H(+). The enzyme catalyses 8-hydroxy-(5Z,9E,11Z,14Z)-eicosatetraenoate + reduced [NADPH--hemoprotein reductase] + O2 = 8,20-dihydroxy-(5Z,9E,11Z,14Z)-eicosatetraenoate + oxidized [NADPH--hemoprotein reductase] + H2O + H(+). It catalyses the reaction 12-hydroxy-(5Z,8Z,10E,14Z)-eicosatetraenoate + reduced [NADPH--hemoprotein reductase] + O2 = 12,20-dihydroxy-(5Z,8Z,10E,14Z)-eicosatetraenoate + oxidized [NADPH--hemoprotein reductase] + H2O + H(+). The catalysed reaction is 12-hydroxyoctadecanoate + reduced [NADPH--hemoprotein reductase] + O2 = 12,18-dihydroxyoctadecanoate + oxidized [NADPH--hemoprotein reductase] + H2O + H(+). It carries out the reaction docosanoate + reduced [NADPH--hemoprotein reductase] + O2 = 22-hydroxydocosanoate + oxidized [NADPH--hemoprotein reductase] + H2O + H(+). The enzyme catalyses 22-hydroxydocosanoate + reduced [NADPH--hemoprotein reductase] + O2 = 22-oxodocosanoate + oxidized [NADPH--hemoprotein reductase] + 2 H2O + H(+). It catalyses the reaction 22-oxodocosanoate + reduced [NADPH--hemoprotein reductase] + O2 = docosanedioate + oxidized [NADPH--hemoprotein reductase] + H2O + 2 H(+). The catalysed reaction is tetracosanoate + reduced [NADPH--hemoprotein reductase] + O2 = 24-hydroxytetracosanoate + oxidized [NADPH--hemoprotein reductase] + H2O + H(+). It carries out the reaction hexacosanoate + reduced [NADPH--hemoprotein reductase] + O2 = 26-hydroxyhexacosanoate + oxidized [NADPH--hemoprotein reductase] + H2O + H(+). The enzyme catalyses 26-hydroxyhexacosanoate + reduced [NADPH--hemoprotein reductase] + O2 = 26-oxohexacosanoate + oxidized [NADPH--hemoprotein reductase] + 2 H2O + H(+). It catalyses the reaction 26-oxohexacosanoate + reduced [NADPH--hemoprotein reductase] + O2 = hexacosanedioate + oxidized [NADPH--hemoprotein reductase] + H2O + 2 H(+). The catalysed reaction is 3-hydroxyoctadecanoate + reduced [NADPH--hemoprotein reductase] + O2 = 3,18-dihydroxyoctadecanoate + oxidized [NADPH--hemoprotein reductase] + H2O + H(+). It carries out the reaction 3-hydroxyhexadecanoate + reduced [NADPH--hemoprotein reductase] + O2 = 3,16-dihydroxyhexadecanoate + oxidized [NADPH--hemoprotein reductase] + H2O + H(+). The enzyme catalyses leukotriene B4 + reduced [NADPH--hemoprotein reductase] + O2 = 20-hydroxy-leukotriene B4 + oxidized [NADPH--hemoprotein reductase] + H2O + H(+). It catalyses the reaction 6-trans-leukotriene B4 + reduced [NADPH--hemoprotein reductase] + O2 = 20-hydroxy-6-trans-leukotriene B4 + oxidized [NADPH--hemoprotein reductase] + H2O + H(+). The catalysed reaction is lipoxin A4 + reduced [NADPH--hemoprotein reductase] + O2 = 20-hydroxy-lipoxin A4 + oxidized [NADPH--hemoprotein reductase] + H2O + H(+). It carries out the reaction menaquinone-4 + reduced [NADPH--hemoprotein reductase] + O2 = omega-hydroxymenaquinone-4 + oxidized [NADPH--hemoprotein reductase] + H2O + H(+). The enzyme catalyses phylloquinone + reduced [NADPH--hemoprotein reductase] + O2 = omega-hydroxyphylloquinone + oxidized [NADPH--hemoprotein reductase] + H2O + H(+). It catalyses the reaction (+)-alpha-tocopherol + reduced [NADPH--hemoprotein reductase] + O2 = 13-hydroxy-alpha-tocopherol + oxidized [NADPH--hemoprotein reductase] + H2O + H(+). The catalysed reaction is gamma-tocopherol + NADPH + O2 + H(+) = 13-hydroxy-gamma-tocopherol + NADP(+) + H2O. It participates in lipid metabolism; arachidonate metabolism. The protein operates within lipid metabolism; leukotriene B4 degradation. Its pathway is cofactor degradation; phylloquinone degradation. With respect to regulation, inhibited by dietary sesamin. Its function is as follows. A cytochrome P450 monooxygenase involved in the metabolism of various endogenous substrates, including fatty acids, eicosanoids and vitamins. Mechanistically, uses molecular oxygen inserting one oxygen atom into a substrate, and reducing the second into a water molecule, with two electrons provided by NADPH via cytochrome P450 reductase (CPR; NADPH-ferrihemoprotein reductase). Catalyzes predominantly the oxidation of the terminal carbon (omega-oxidation) of long- and very long-chain fatty acids. Displays high omega-hydroxylase activity toward polyunsaturated fatty acids (PUFAs). Participates in the conversion of arachidonic acid to omega-hydroxyeicosatetraenoic acid (20-HETE), a signaling molecule acting both as vasoconstrictive and natriuretic with overall effect on arterial blood pressure. Plays a role in the oxidative inactivation of eicosanoids, including both pro-inflammatory and anti-inflammatory mediators such as leukotriene B4 (LTB4), lipoxin A4 (LXA4), and several HETEs. Catalyzes omega-hydroxylation of 3-hydroxy fatty acids. Converts monoepoxides of linoleic acid leukotoxin and isoleukotoxin to omega-hydroxylated metabolites. Contributes to the degradation of very long-chain fatty acids (VLCFAs) by catalyzing successive omega-oxidations and chain shortening. Plays an important role in vitamin metabolism by chain shortening. Catalyzes omega-hydroxylation of the phytyl chain of tocopherols (forms of vitamin E), with preference for gamma-tocopherols over alpha-tocopherols, thus promoting retention of alpha-tocopherols in tissues. Omega-hydroxylates and inactivates phylloquinone (vitamin K1), and menaquinone-4 (MK-4, a form of vitamin K2), both acting as cofactors in blood coagulation. The protein is Cytochrome P450 4F2 of Homo sapiens (Human).